A 50-amino-acid chain; its full sequence is Inter-alpha-trypsin inhibitor heavy chain H2 (50 aa).

Belongs to the ITIH family. In terms of assembly, I-alpha-I plasma protease inhibitors are assembled from one or two heavy chains (HC) and one light chain, bikunin. Inter-alpha-inhibitor (I-alpha-I) is composed of ITIH1/HC1, ITIH2/HC2 and bikunin. Post-translationally, phosphorylated by FAM20C in the extracellular medium.

It localises to the secreted. Its function is as follows. May act as a carrier of hyaluronan in serum or as a binding protein between hyaluronan and other matrix protein, including those on cell surfaces in tissues to regulate the localization, synthesis and degradation of hyaluronan which are essential to cells undergoing biological processes. The protein is Inter-alpha-trypsin inhibitor heavy chain H2 (ITIH2) of Bos taurus (Bovine).